Consider the following 216-residue polypeptide: LexA repressor (216 aa).

Positions 28–48 (RAEIAAELGFSSANSAEEHLR) form a DNA-binding region, H-T-H motif. Residues Ser134 and Lys171 each act as for autocatalytic cleavage activity in the active site.

This sequence belongs to the peptidase S24 family. As to quaternary structure, homodimer.

The enzyme catalyses Hydrolysis of Ala-|-Gly bond in repressor LexA.. Functionally, represses a number of genes involved in the response to DNA damage (SOS response), including recA and lexA. In the presence of single-stranded DNA, RecA interacts with LexA causing an autocatalytic cleavage which disrupts the DNA-binding part of LexA, leading to derepression of the SOS regulon and eventually DNA repair. This chain is LexA repressor, found in Paraburkholderia phytofirmans (strain DSM 17436 / LMG 22146 / PsJN) (Burkholderia phytofirmans).